The primary structure comprises 307 residues: Aspartate carbamoyltransferase catalytic subunit (307 aa).

Carbamoyl phosphate-binding residues include R59 and T60. K87 contacts L-aspartate. Positions 109, 137, and 140 each coordinate carbamoyl phosphate. L-aspartate-binding residues include R173 and R223. Carbamoyl phosphate is bound by residues G266 and P267.

Belongs to the aspartate/ornithine carbamoyltransferase superfamily. ATCase family. As to quaternary structure, heterododecamer (2C3:3R2) of six catalytic PyrB chains organized as two trimers (C3), and six regulatory PyrI chains organized as three dimers (R2).

It catalyses the reaction carbamoyl phosphate + L-aspartate = N-carbamoyl-L-aspartate + phosphate + H(+). It participates in pyrimidine metabolism; UMP biosynthesis via de novo pathway; (S)-dihydroorotate from bicarbonate: step 2/3. In terms of biological role, catalyzes the condensation of carbamoyl phosphate and aspartate to form carbamoyl aspartate and inorganic phosphate, the committed step in the de novo pyrimidine nucleotide biosynthesis pathway. In Helicobacter pylori (strain HPAG1), this protein is Aspartate carbamoyltransferase catalytic subunit.